A 3127-amino-acid polypeptide reads, in one-letter code: Probable polyketide synthase 33 (3127 aa).

The Ketosynthase family 3 (KS3) domain occupies 24 to 457 (SGDVAVVGIG…GSNVCLILSE (434 aa)). Catalysis depends on for beta-ketoacyl synthase activity residues Cys-196, His-335, and His-380. Residues 660–693 (GVSADIIIGHSLGEISSAYCSGMIDFQTLCYLTY) are acyl/malonyl transferase. The active-site For acyl/malonyl transferase activity is Ser-670. The segment at 958-1080 (GPSIHSLGNN…GNFSLFKHNI (123 aa)) is N-terminal hotdog fold. The 300-residue stretch at 958–1257 (GPSIHSLGNN…CTIVGSNPDS (300 aa)) folds into the PKS/mFAS DH domain. His-992 (proton acceptor; for dehydratase activity) is an active-site residue. Residues 1096 to 1257 (NFTTISKQDF…CTIVGSNPDS (162 aa)) form a C-terminal hotdog fold region. The Proton donor; for dehydratase activity role is filled by Asp-1168. A disordered region spans residues 1369–1394 (SNNNNNNNNNNNNNNNNNNNNKNNGY). The span at 1370–1394 (NNNNNNNNNNNNNNNNNNNNKNNGY) shows a compositional bias: low complexity. The 78-residue stretch at 2539–2616 (SNNEIIRSTI…QSIEIIKSAH (78 aa)) folds into the Carrier domain. Residue Ser-2576 is modified to O-(pantetheine 4'-phosphoryl)serine. The tract at residues 2617 to 2659 (NKNNNNNNINNNNNNNNNNNNNNNNNNNNNNNNNNNNNNNNNN) is disordered. The stretch at 2617-2671 (NKNNNNNNINNNNNNNNNNNNNNNNNNNNNNNNNNNNNNNNNNLVKKEQQSLDEF) forms a coiled coil. Residues 2937 to 2957 (VLTLYNIPITIFIAILIIDIF) traverse the membrane as a helical segment.

The cofactor is pantetheine 4'-phosphate.

The protein resides in the membrane. Functionally, probable polyketide synthase. The sequence is that of Probable polyketide synthase 33 (pks33) from Dictyostelium discoideum (Social amoeba).